Here is a 244-residue protein sequence, read N- to C-terminus: MRPNNRPVDQTRPVKITRNYTRYAEGSVLVEFGETKVLCNATVEETVPRFLKGQQQGWVTAEYGMLPRATHSRTQREAAKGKQGGRTMEIQRLIARSLRAVVDLKALGERTITVDCDVIQADGGTRTASITGACVALHDAINKLIADGLLKENPMKGLVAAISVGIVDGQAVCDLEYVEDSNAETDMNVVMVEDGRLVEVQGTAEGEPFSHMELLQLLDLAQKGIEQLFEAQRQALNATSDAIR.

Phosphate-binding positions include arginine 86 and 124-126; that span reads GTR.

It belongs to the RNase PH family. As to quaternary structure, homohexameric ring arranged as a trimer of dimers.

It catalyses the reaction tRNA(n+1) + phosphate = tRNA(n) + a ribonucleoside 5'-diphosphate. Phosphorolytic 3'-5' exoribonuclease that plays an important role in tRNA 3'-end maturation. Removes nucleotide residues following the 3'-CCA terminus of tRNAs; can also add nucleotides to the ends of RNA molecules by using nucleoside diphosphates as substrates, but this may not be physiologically important. Probably plays a role in initiation of 16S rRNA degradation (leading to ribosome degradation) during starvation. The chain is Ribonuclease PH from Glaesserella parasuis serovar 5 (strain SH0165) (Haemophilus parasuis).